The chain runs to 605 residues: Adaptin medium chain homolog APM2 (605 aa).

Positions E150–K196 are disordered. Positions G155–S171 are enriched in low complexity. Positions N174 to K196 are enriched in basic residues. The MHD domain occupies K269–I604.

This sequence belongs to the adaptor complexes medium subunit family. As to quaternary structure, component of the AP-1R complex composed of at least APM2, APL4 and APS1. Interacts with MIL1. Interacts with APL2.

It localises to the golgi apparatus membrane. The protein localises to the early endosome membrane. It is found in the cytoplasmic vesicle. Its subcellular location is the clathrin-coated vesicle membrane. Component of the AP-1-related (AP-1R) complex, an adapter protein complex that mediates of cargo protein sorting in clathrin-coated vesicles. AP-1R has a specific role in SNARE SNC1 sorting. In contrast to the APM1-containing AP-1 complex, AP-1R is incapable of sorting CHS3. This Saccharomyces cerevisiae (strain ATCC 204508 / S288c) (Baker's yeast) protein is Adaptin medium chain homolog APM2 (APM2).